We begin with the raw amino-acid sequence, 591 residues long: Aspartate--tRNA ligase (591 aa).

Glu-175 contributes to the L-aspartate binding site. The segment at 199–202 (QLFK) is aspartate. Residue Arg-221 participates in L-aspartate binding. Residues 221-223 (RDE) and Gln-230 contribute to the ATP site. His-449 lines the L-aspartate pocket. Position 483 (Glu-483) interacts with ATP. Residue Arg-490 coordinates L-aspartate. ATP is bound at residue 535–538 (GLDR).

This sequence belongs to the class-II aminoacyl-tRNA synthetase family. Type 1 subfamily. In terms of assembly, homodimer.

The protein localises to the cytoplasm. It catalyses the reaction tRNA(Asp) + L-aspartate + ATP = L-aspartyl-tRNA(Asp) + AMP + diphosphate. Functionally, catalyzes the attachment of L-aspartate to tRNA(Asp) in a two-step reaction: L-aspartate is first activated by ATP to form Asp-AMP and then transferred to the acceptor end of tRNA(Asp). The polypeptide is Aspartate--tRNA ligase (Oceanobacillus iheyensis (strain DSM 14371 / CIP 107618 / JCM 11309 / KCTC 3954 / HTE831)).